Here is a 395-residue protein sequence, read N- to C-terminus: THP3 homolog C2A9.11c (395 aa).

The interval 91 to 127 (LLSEEDEVDKKEKRRRRFENGSRSQNNAKSEELKVNP) is disordered. The PCI domain maps to 218 to 384 (DVGEYNQCQT…STDRFEKCMK (167 aa)).

The protein belongs to the THP3 family.

It localises to the cytoplasm. It is found in the nucleus. In terms of biological role, required for transcription elongation. May also be involved in pre-mRNA splicing. This is THP3 homolog C2A9.11c from Schizosaccharomyces pombe (strain 972 / ATCC 24843) (Fission yeast).